We begin with the raw amino-acid sequence, 207 residues long: tRNA (pseudouridine(54)-N(1))-methyltransferase (207 aa).

Position 137 (leucine 137) interacts with S-adenosyl-L-methionine.

This sequence belongs to the methyltransferase superfamily. TrmY family. In terms of assembly, homodimer.

Its subcellular location is the cytoplasm. It carries out the reaction pseudouridine(54) in tRNA + S-adenosyl-L-methionine = N(1)-methylpseudouridine(54) in tRNA + S-adenosyl-L-homocysteine + H(+). Functionally, specifically catalyzes the N1-methylation of pseudouridine at position 54 (Psi54) in tRNAs. The polypeptide is tRNA (pseudouridine(54)-N(1))-methyltransferase (Halorubrum lacusprofundi (strain ATCC 49239 / DSM 5036 / JCM 8891 / ACAM 34)).